The primary structure comprises 222 residues: MFSKQVTDSKVYQWFNDRLEIQAISDDITSKYVPPHVNIFYCLGGITLVCFLVQFATGFAMTFYYKPTVTEAFSSVQYIMNEVNFGWLIRSIHRWSASMMVLMMILHVFRVYLTGGFKKPRELTWMTGVILAVITVSFGVTGYSLPWDQVGYWAVKIVSGVPAAIPVVGDQMVELLRGGQSVGQATLTRFYSLHTFVFPWLIAVFMLAHFLMIRKQGISGPL.

The chain crosses the membrane as a helical span at residues 39–59 (IFYCLGGITLVCFLVQFATGF). Residue cysteine 42 participates in heme c binding. Heme b-binding residues include histidine 93 and histidine 107. 3 helical membrane passes run 97–117 (ASMM…TGGF), 123–143 (LTWM…VTGY), and 193–213 (LHTF…FLMI). The heme b site is built by histidine 194 and histidine 209.

Belongs to the cytochrome b family. PetB subfamily. As to quaternary structure, the 4 large subunits of the cytochrome b6-f complex are cytochrome b6, subunit IV (17 kDa polypeptide, PetD), cytochrome f and the Rieske protein, while the 4 small subunits are PetG, PetL, PetM and PetN. The complex functions as a dimer. Heme b is required as a cofactor. It depends on heme c as a cofactor.

It is found in the cellular thylakoid membrane. Functionally, component of the cytochrome b6-f complex, which mediates electron transfer between photosystem II (PSII) and photosystem I (PSI), cyclic electron flow around PSI, and state transitions. This is Cytochrome b6 from Crocosphaera subtropica (strain ATCC 51142 / BH68) (Cyanothece sp. (strain ATCC 51142)).